A 236-amino-acid chain; its full sequence is Large ribosomal subunit protein uL3 (236 aa).

The segment at 215–236 is disordered; it reads PAPEPAAPVAAAAAGTGEEASA. Low complexity predominate over residues 221–236; it reads APVAAAAAGTGEEASA.

It belongs to the universal ribosomal protein uL3 family. Part of the 50S ribosomal subunit. Forms a cluster with proteins L14 and L19.

Its function is as follows. One of the primary rRNA binding proteins, it binds directly near the 3'-end of the 23S rRNA, where it nucleates assembly of the 50S subunit. The protein is Large ribosomal subunit protein uL3 of Parafrankia sp. (strain EAN1pec).